Consider the following 362-residue polypeptide: Dihydroorotate dehydrogenase (quinone) (362 aa).

Residues Ala-62 to Lys-66 and Thr-86 each bind FMN. A substrate-binding site is contributed by Lys-66. Residue Asn-111–Phe-115 coordinates substrate. 2 residues coordinate FMN: Asn-139 and Asn-170. Asn-170 is a substrate binding site. Ser-173 functions as the Nucleophile in the catalytic mechanism. Asn-175 lines the substrate pocket. FMN-binding residues include Lys-215 and Ser-243. Asn-244–Thr-245 is a binding site for substrate. Residues Gly-266, Gly-295, and Tyr-316–Ser-317 each bind FMN.

The protein belongs to the dihydroorotate dehydrogenase family. Type 2 subfamily. As to quaternary structure, monomer. The cofactor is FMN.

The protein resides in the cell membrane. The catalysed reaction is (S)-dihydroorotate + a quinone = orotate + a quinol. Its pathway is pyrimidine metabolism; UMP biosynthesis via de novo pathway; orotate from (S)-dihydroorotate (quinone route): step 1/1. Functionally, catalyzes the conversion of dihydroorotate to orotate with quinone as electron acceptor. The sequence is that of Dihydroorotate dehydrogenase (quinone) from Rhizobium meliloti (strain 1021) (Ensifer meliloti).